Consider the following 497-residue polypeptide: Acetyl-coenzyme A carboxylase carboxyl transferase subunit beta, chloroplastic (497 aa).

The CoA carboxyltransferase N-terminal domain maps to 230-497 (LWVQCENCYG…FFPLNQNSIK (268 aa)). 4 residues coordinate Zn(2+): Cys234, Cys237, Cys253, and Cys256. The C4-type zinc-finger motif lies at 234-256 (CENCYGLNYKKFLKSKMNICEQC).

This sequence belongs to the AccD/PCCB family. In terms of assembly, acetyl-CoA carboxylase is a heterohexamer composed of biotin carboxyl carrier protein, biotin carboxylase and 2 subunits each of ACCase subunit alpha and ACCase plastid-coded subunit beta (accD). The cofactor is Zn(2+).

It is found in the plastid. It localises to the chloroplast stroma. It carries out the reaction N(6)-carboxybiotinyl-L-lysyl-[protein] + acetyl-CoA = N(6)-biotinyl-L-lysyl-[protein] + malonyl-CoA. The protein operates within lipid metabolism; malonyl-CoA biosynthesis; malonyl-CoA from acetyl-CoA: step 1/1. Component of the acetyl coenzyme A carboxylase (ACC) complex. Biotin carboxylase (BC) catalyzes the carboxylation of biotin on its carrier protein (BCCP) and then the CO(2) group is transferred by the transcarboxylase to acetyl-CoA to form malonyl-CoA. This is Acetyl-coenzyme A carboxylase carboxyl transferase subunit beta, chloroplastic from Carica papaya (Papaya).